Reading from the N-terminus, the 421-residue chain is Gamma-glutamyl phosphate reductase (421 aa).

It belongs to the gamma-glutamyl phosphate reductase family.

Its subcellular location is the cytoplasm. It carries out the reaction L-glutamate 5-semialdehyde + phosphate + NADP(+) = L-glutamyl 5-phosphate + NADPH + H(+). It functions in the pathway amino-acid biosynthesis; L-proline biosynthesis; L-glutamate 5-semialdehyde from L-glutamate: step 2/2. Functionally, catalyzes the NADPH-dependent reduction of L-glutamate 5-phosphate into L-glutamate 5-semialdehyde and phosphate. The product spontaneously undergoes cyclization to form 1-pyrroline-5-carboxylate. The sequence is that of Gamma-glutamyl phosphate reductase from Pseudomonas aeruginosa (strain UCBPP-PA14).